A 126-amino-acid chain; its full sequence is Fluoride-specific ion channel FluC (126 aa).

Helical transmembrane passes span 5-25, 35-55, 68-88, and 99-119; these read LHFL…WLLG, WGTL…LGLI, ALVT…AEVV, and AAGY…LGLA. Na(+) is bound by residues glycine 75 and threonine 78.

It belongs to the fluoride channel Fluc/FEX (TC 1.A.43) family.

Its subcellular location is the cell inner membrane. It carries out the reaction fluoride(in) = fluoride(out). Na(+) is not transported, but it plays an essential structural role and its presence is essential for fluoride channel function. Fluoride-specific ion channel. Important for reducing fluoride concentration in the cell, thus reducing its toxicity. This is Fluoride-specific ion channel FluC from Bordetella avium (strain 197N).